The following is a 231-amino-acid chain: Ribose-5-phosphate isomerase A (231 aa).

Residues 32–35 (TGST), 85–88 (DGAD), and 98–101 (KGGG) contribute to the substrate site. Glu-107 acts as the Proton acceptor in catalysis. Lys-125 lines the substrate pocket.

It belongs to the ribose 5-phosphate isomerase family. Homodimer.

The enzyme catalyses aldehydo-D-ribose 5-phosphate = D-ribulose 5-phosphate. Its pathway is carbohydrate degradation; pentose phosphate pathway; D-ribose 5-phosphate from D-ribulose 5-phosphate (non-oxidative stage): step 1/1. Functionally, catalyzes the reversible conversion of ribose-5-phosphate to ribulose 5-phosphate. The chain is Ribose-5-phosphate isomerase A from Burkholderia orbicola (strain MC0-3).